A 646-amino-acid polypeptide reads, in one-letter code: Peptidylprolyl isomerase domain and WD repeat-containing protein 1 (646 aa).

The disordered stretch occupies residues 1–30 (MAAESGSDFQQRRRRRRDPEEPEKTELSER). Alanine 2 carries the N-acetylalanine modification. A compositionally biased stretch (basic and acidic residues) spans 17–30 (RDPEEPEKTELSER). WD repeat units follow at residues 80 to 118 (ASMY…FWKK), 124 to 162 (EFVK…VFDV), 168 to 208 (INML…IYDG), 213 to 252 (QPLH…YWTG), 271 to 309 (TDLY…IFRF), 345 to 386 (AVER…VETN), and 401 to 453 (MQLA…MFTK). Residues 455 to 478 (EPEDTKSADSDRDVFNEKPSKEEV) are compositionally biased toward basic and acidic residues. A disordered region spans residues 455 to 490 (EPEDTKSADSDRDVFNEKPSKEEVMAATQAEGPKRV). The region spanning 490-645 (VSDSAIIHTS…EDVSIINITV (156 aa)) is the PPIase cyclophilin-type domain.

Belongs to the cyclophilin-type PPIase family. PPIL1 subfamily. Identified in the spliceosome C complex.

The protein resides in the nucleus. The catalysed reaction is [protein]-peptidylproline (omega=180) = [protein]-peptidylproline (omega=0). With respect to regulation, inhibited by cyclosporin A (CsA). Functionally, PPIase that catalyzes the cis-trans isomerization of proline imidic peptide bonds in oligopeptides and may therefore assist protein folding. May be involved in pre-mRNA splicing. The sequence is that of Peptidylprolyl isomerase domain and WD repeat-containing protein 1 from Homo sapiens (Human).